Reading from the N-terminus, the 239-residue chain is Adapter protein MecA (239 aa).

Basic and acidic residues predominate over residues 118-128; that stretch reads EQRTKEKEAQG. The tract at residues 118-137 is disordered; it reads EQRTKEKEAQGSKRQKSSAR.

Belongs to the MecA family. Homodimer.

Its function is as follows. Enables the recognition and targeting of unfolded and aggregated proteins to the ClpC protease or to other proteins involved in proteolysis. The sequence is that of Adapter protein MecA from Staphylococcus aureus (strain USA300).